Here is a 299-residue protein sequence, read N- to C-terminus: Nucleotide-binding protein SAV_6292 (299 aa).

ATP is bound at residue 23 to 30 (GMSGAGRS). A GTP-binding site is contributed by 74 to 77 (DVRG).

This sequence belongs to the RapZ-like family.

Functionally, displays ATPase and GTPase activities. The sequence is that of Nucleotide-binding protein SAV_6292 from Streptomyces avermitilis (strain ATCC 31267 / DSM 46492 / JCM 5070 / NBRC 14893 / NCIMB 12804 / NRRL 8165 / MA-4680).